A 318-amino-acid polypeptide reads, in one-letter code: Thioredoxin reductase (318 aa).

36–43 (TGLQQGGQ) provides a ligand contact to FAD. A disulfide bond links cysteine 136 and cysteine 139. 286–295 (DVMDHNYRQA) is an FAD binding site.

Belongs to the class-II pyridine nucleotide-disulfide oxidoreductase family. Homodimer. It depends on FAD as a cofactor.

Its subcellular location is the cytoplasm. The catalysed reaction is [thioredoxin]-dithiol + NADP(+) = [thioredoxin]-disulfide + NADPH + H(+). The chain is Thioredoxin reductase (trxB) from Haemophilus influenzae (strain ATCC 51907 / DSM 11121 / KW20 / Rd).